Consider the following 604-residue polypeptide: Sulfite reductase [NADPH] flavoprotein alpha-component (604 aa).

The Flavodoxin-like domain occupies 65–203 (VTILYGSQTG…AAGQWHADVL (139 aa)). FMN contacts are provided by residues 71–76 (SQTGNG), 118–121 (STHG), and 154–163 (LGDSSYEFFC). The FAD-binding FR-type domain occupies 236 to 453 (QNPYSAEVLV…VEPNKHFRLP (218 aa)). FAD is bound by residues Thr324, Leu358, 392-395 (RLYS), 410-412 (TVA), and 425-428 (GGAS). NADP(+) is bound by residues 524-525 (SR), 530-534 (KIYVQ), and Asp566. Residue Tyr604 coordinates FAD.

This sequence belongs to the NADPH-dependent sulphite reductase flavoprotein subunit CysJ family. The protein in the N-terminal section; belongs to the flavodoxin family. In the C-terminal section; belongs to the flavoprotein pyridine nucleotide cytochrome reductase family. As to quaternary structure, alpha(8)-beta(8). The alpha component is a flavoprotein, the beta component is a hemoprotein. FAD serves as cofactor. Requires FMN as cofactor.

It carries out the reaction hydrogen sulfide + 3 NADP(+) + 3 H2O = sulfite + 3 NADPH + 4 H(+). It functions in the pathway sulfur metabolism; hydrogen sulfide biosynthesis; hydrogen sulfide from sulfite (NADPH route): step 1/1. Its function is as follows. Component of the sulfite reductase complex that catalyzes the 6-electron reduction of sulfite to sulfide. This is one of several activities required for the biosynthesis of L-cysteine from sulfate. The flavoprotein component catalyzes the electron flow from NADPH -&gt; FAD -&gt; FMN to the hemoprotein component. This Shewanella sp. (strain MR-4) protein is Sulfite reductase [NADPH] flavoprotein alpha-component.